The primary structure comprises 559 residues: MQGPWVLLLLGLRLQLSLSVIPVEEENPAFWNKKAAEALDAAKKLQPIQTSAKNLIIFLGDGMGVPTVTATRILKGQLEGHLGPETPLAMDRFPYMALSKTYSVDRQVPDSASTATAYLCGVKTNYKTIGLSAAARFDQCNTTFGNEVFSVMYRAKKAGKSVGVVTTTRVQHASPSGTYVHTVNRNWYGDADMPASALREGCKDIATQLISNMDINVILGGGRKYMFPAGTPDPEYPNDANETGTRLDGRNLVQEWLSKHQGSQYVWNREQLIQKAQDPSVTYLMGLFEPVDTKFDIQRDPLMDPSLKDMTETAVKVLSRNPKGFYLFVEGGRIDRGHHLGTAYLALTEAVMFDLAIERASQLTSERDTLTIVTADHSHVFSFGGYTLRGTSIFGLAPLNALDGKPYTSILYGNGPGYVGTGERPNVTAAESSGSSYRRQAAVPVKSETHGGEDVAIFARGPQAHLVHGVQEQNYIAHVMASAGCLEPYTDCGLAPPADESQTTTTTRQTTITTTTTTTTTTTTPVHNSARSLGPATAPLALALLAGMLMLLLGAPAES.

The N-terminal stretch at 1 to 19 (MQGPWVLLLLGLRLQLSLS) is a signal peptide. A Mg(2+)-binding site is contributed by aspartate 61. Residues aspartate 61 and serine 111 each coordinate Zn(2+). Serine 111 acts as the Phosphoserine intermediate in catalysis. Cysteine 140 and cysteine 202 are joined by a disulfide. Asparagine 141 is a glycosylation site (N-linked (GlcNAc...) asparagine). Serine 174 is a binding site for Mg(2+). Glutamate 235 is a Ca(2+) binding site. Residue asparagine 241 is glycosylated (N-linked (GlcNAc...) asparagine). Residues phenylalanine 288, glutamate 289, and aspartate 304 each contribute to the Ca(2+) site. Glutamate 330 lines the Mg(2+) pocket. Zn(2+) is bound by residues aspartate 335, histidine 339, aspartate 376, and histidine 377. A glycan (N-linked (GlcNAc...) asparagine) is linked at asparagine 426. Residue histidine 450 coordinates Zn(2+). The cysteines at positions 485 and 492 are disulfide-linked. Residues 496–531 (PPADESQTTTTTRQTTITTTTTTTTTTTTPVHNSAR) are disordered. A compositionally biased stretch (low complexity) spans 503-524 (TTTTTRQTTITTTTTTTTTTTT). Asparagine 528 is lipidated: GPI-anchor amidated asparagine. Positions 529-559 (SARSLGPATAPLALALLAGMLMLLLGAPAES) are cleaved as a propeptide — removed in mature form.

Belongs to the alkaline phosphatase family. As to quaternary structure, homodimer. It depends on Mg(2+) as a cofactor. The cofactor is Zn(2+). Ca(2+) serves as cofactor. Intestine and thymus.

Its subcellular location is the cell membrane. It carries out the reaction a phosphate monoester + H2O = an alcohol + phosphate. Alkaline phosphatase that can hydrolyze various phosphate compounds. In Mus musculus (Mouse), this protein is Intestinal-type alkaline phosphatase (Iap).